The sequence spans 258 residues: Triosephosphate isomerase (258 aa).

Residue 11–13 (NWK) coordinates substrate. The active-site Electrophile is the H101. The active-site Proton acceptor is E173. Substrate contacts are provided by residues G179, S219, and 240–241 (GG).

This sequence belongs to the triosephosphate isomerase family. In terms of assembly, homodimer.

The protein resides in the cytoplasm. The catalysed reaction is D-glyceraldehyde 3-phosphate = dihydroxyacetone phosphate. It participates in carbohydrate biosynthesis; gluconeogenesis. The protein operates within carbohydrate degradation; glycolysis; D-glyceraldehyde 3-phosphate from glycerone phosphate: step 1/1. Its function is as follows. Involved in the gluconeogenesis. Catalyzes stereospecifically the conversion of dihydroxyacetone phosphate (DHAP) to D-glyceraldehyde-3-phosphate (G3P). This chain is Triosephosphate isomerase, found in Streptomyces coelicolor (strain ATCC BAA-471 / A3(2) / M145).